The sequence spans 235 residues: Small ribosomal subunit protein uS5 (235 aa).

In terms of domain architecture, S5 DRBM spans 60-123 (ENQEVLDIAL…NYAKMNIIEI (64 aa)). Residues Cys-127, Cys-132, Cys-134, and His-138 each contribute to the Zn(2+) site.

It belongs to the universal ribosomal protein uS5 family. Part of the 30S ribosomal subunit. Contacts protein S4. The cofactor is Zn(2+).

Functionally, with S4 and S12 plays an important role in translational accuracy. In Thermococcus kodakarensis (strain ATCC BAA-918 / JCM 12380 / KOD1) (Pyrococcus kodakaraensis (strain KOD1)), this protein is Small ribosomal subunit protein uS5.